The sequence spans 402 residues: Argininosuccinate synthase (402 aa).

ATP is bound by residues 10–18 and Ala38; that span reads AYSGGLDTS. Tyr90 contributes to the L-citrulline binding site. Gly120 contributes to the ATP binding site. L-aspartate contacts are provided by Thr122, Asn126, and Asp127. Position 126 (Asn126) interacts with L-citrulline. Residues Arg130, Ser179, Ser188, Glu264, and Tyr276 each contribute to the L-citrulline site.

Belongs to the argininosuccinate synthase family. Type 1 subfamily. As to quaternary structure, homotetramer.

The protein resides in the cytoplasm. It catalyses the reaction L-citrulline + L-aspartate + ATP = 2-(N(omega)-L-arginino)succinate + AMP + diphosphate + H(+). Its pathway is amino-acid biosynthesis; L-arginine biosynthesis; L-arginine from L-ornithine and carbamoyl phosphate: step 2/3. This Psychromonas ingrahamii (strain DSM 17664 / CCUG 51855 / 37) protein is Argininosuccinate synthase.